Here is a 124-residue protein sequence, read N- to C-terminus: uncharacterized protein (124 aa).

This is an uncharacterized protein from Bacillus subtilis (strain 168).